A 360-amino-acid chain; its full sequence is 4-hydroxy-3-methylbut-2-en-1-yl diphosphate synthase (flavodoxin) (360 aa).

Residues Cys-265, Cys-268, Cys-300, and Glu-307 each coordinate [4Fe-4S] cluster.

It belongs to the IspG family. It depends on [4Fe-4S] cluster as a cofactor.

It carries out the reaction (2E)-4-hydroxy-3-methylbut-2-enyl diphosphate + oxidized [flavodoxin] + H2O + 2 H(+) = 2-C-methyl-D-erythritol 2,4-cyclic diphosphate + reduced [flavodoxin]. Its pathway is isoprenoid biosynthesis; isopentenyl diphosphate biosynthesis via DXP pathway; isopentenyl diphosphate from 1-deoxy-D-xylulose 5-phosphate: step 5/6. Functionally, converts 2C-methyl-D-erythritol 2,4-cyclodiphosphate (ME-2,4cPP) into 1-hydroxy-2-methyl-2-(E)-butenyl 4-diphosphate. The sequence is that of 4-hydroxy-3-methylbut-2-en-1-yl diphosphate synthase (flavodoxin) from Brevibacillus brevis (strain 47 / JCM 6285 / NBRC 100599).